Consider the following 251-residue polypeptide: Hydroxyacylglutathione hydrolase (251 aa).

Zn(2+) is bound by residues histidine 55, histidine 57, aspartate 59, histidine 60, histidine 112, aspartate 131, and histidine 169.

Belongs to the metallo-beta-lactamase superfamily. Glyoxalase II family. In terms of assembly, monomer. Requires Zn(2+) as cofactor.

It catalyses the reaction an S-(2-hydroxyacyl)glutathione + H2O = a 2-hydroxy carboxylate + glutathione + H(+). It participates in secondary metabolite metabolism; methylglyoxal degradation; (R)-lactate from methylglyoxal: step 2/2. Thiolesterase that catalyzes the hydrolysis of S-D-lactoyl-glutathione to form glutathione and D-lactic acid. The chain is Hydroxyacylglutathione hydrolase from Erythrobacter litoralis (strain HTCC2594).